Here is a 522-residue protein sequence, read N- to C-terminus: Peptide chain release factor 3 (522 aa).

One can recognise a tr-type G domain in the interval 10–277 (ASRKTFAIIS…TFVDFAPSPS (268 aa)). Residues 19–26 (SHPDAGKT), 87–91 (DTPGH), and 141–144 (NKMD) each bind GTP.

It belongs to the TRAFAC class translation factor GTPase superfamily. Classic translation factor GTPase family. PrfC subfamily.

The protein localises to the cytoplasm. In terms of biological role, increases the formation of ribosomal termination complexes and stimulates activities of RF-1 and RF-2. It binds guanine nucleotides and has strong preference for UGA stop codons. It may interact directly with the ribosome. The stimulation of RF-1 and RF-2 is significantly reduced by GTP and GDP, but not by GMP. This Listeria monocytogenes serotype 4b (strain F2365) protein is Peptide chain release factor 3.